Consider the following 147-residue polypeptide: Cyanate hydratase (147 aa).

Catalysis depends on residues Arg88, Glu91, and Ser114.

It belongs to the cyanase family.

The catalysed reaction is cyanate + hydrogencarbonate + 3 H(+) = NH4(+) + 2 CO2. Its function is as follows. Catalyzes the reaction of cyanate with bicarbonate to produce ammonia and carbon dioxide. This chain is Cyanate hydratase, found in Ralstonia pickettii (strain 12J).